A 363-amino-acid polypeptide reads, in one-letter code: tRNA(Met) cytidine acetate ligase (363 aa).

Residues 7 to 20 (IAEF…HKYL), Gly-96, Asn-152, and Arg-175 each bind ATP.

This sequence belongs to the TmcAL family.

Its subcellular location is the cytoplasm. The enzyme catalyses cytidine(34) in elongator tRNA(Met) + acetate + ATP = N(4)-acetylcytidine(34) in elongator tRNA(Met) + AMP + diphosphate. Functionally, catalyzes the formation of N(4)-acetylcytidine (ac(4)C) at the wobble position of elongator tRNA(Met), using acetate and ATP as substrates. First activates an acetate ion to form acetyladenylate (Ac-AMP) and then transfers the acetyl group to tRNA to form ac(4)C34. The polypeptide is tRNA(Met) cytidine acetate ligase (Streptococcus thermophilus (strain ATCC BAA-250 / LMG 18311)).